The sequence spans 152 residues: Deoxyuridine 5'-triphosphate nucleotidohydrolase (152 aa).

Substrate contacts are provided by residues 71 to 73, Asn-84, 88 to 90, and Met-98; these read RSG and LID.

Belongs to the dUTPase family. Requires Mg(2+) as cofactor.

It catalyses the reaction dUTP + H2O = dUMP + diphosphate + H(+). It participates in pyrimidine metabolism; dUMP biosynthesis; dUMP from dCTP (dUTP route): step 2/2. This enzyme is involved in nucleotide metabolism: it produces dUMP, the immediate precursor of thymidine nucleotides and it decreases the intracellular concentration of dUTP so that uracil cannot be incorporated into DNA. The sequence is that of Deoxyuridine 5'-triphosphate nucleotidohydrolase from Coxiella burnetii (strain RSA 331 / Henzerling II).